Here is a 367-residue protein sequence, read N- to C-terminus: Terpene cyclase verU1 (367 aa).

A helical membrane pass occupies residues 8 to 28 (IRCSLLLLGLVGIYTVWISSF). The N-linked (GlcNAc...) asparagine glycan is linked to Asn-50. Helical transmembrane passes span 57–77 (FTGIDTLDKALGIFVVFYWPV), 85–105 (LSLIAFPAAVGVGEMWILFAL), 120–140 (MAMFGMGLMLVGPGIFLPIYC), 169–189 (CLLGGYYILVILLALPSPAVV), 197–217 (IIALLQGWPLLVSAMLWLTHL), 239–259 (ISAMACATISHLVPLLISLLA), 292–312 (FQWDYGLGSLALLLWAVGLHI), and 327–347 (LIPEALFLSVMMSPCGAAALY). A glycan (N-linked (GlcNAc...) asparagine) is linked at Asn-352.

It belongs to the membrane-bound ascI terpene cyclase family.

The protein localises to the membrane. The protein operates within secondary metabolite biosynthesis; terpenoid biosynthesis. Its pathway is mycotoxin biosynthesis. Terpene cyclase; part of the gene cluster that mediates the biosynthesis of the neurotoxin verrucosidin, a methylated alpha-pyrone polyketide that inhibits oxidative phosphorylation in mitochondria and thereby causes neurological diseases. The carbon backbone of verrucosidin is synthesized by the HR-PKS verA, and further modified by the other verrucodidin cluster enzymes. The sequence is that of Terpene cyclase verU1 from Penicillium polonicum.